The chain runs to 370 residues: CCA-adding enzyme (370 aa).

ATP contacts are provided by Gly8 and Arg11. The CTP site is built by Gly8 and Arg11. The Mg(2+) site is built by Asp21 and Asp23. ATP-binding residues include Arg91, Arg137, and Arg140. The CTP site is built by Arg91, Arg137, and Arg140.

This sequence belongs to the tRNA nucleotidyltransferase/poly(A) polymerase family. Bacterial CCA-adding enzyme type 2 subfamily. It depends on Mg(2+) as a cofactor.

It carries out the reaction a tRNA precursor + 2 CTP + ATP = a tRNA with a 3' CCA end + 3 diphosphate. It catalyses the reaction a tRNA with a 3' CCA end + 2 CTP + ATP = a tRNA with a 3' CCACCA end + 3 diphosphate. Catalyzes the addition and repair of the essential 3'-terminal CCA sequence in tRNAs without using a nucleic acid template. Adds these three nucleotides in the order of C, C, and A to the tRNA nucleotide-73, using CTP and ATP as substrates and producing inorganic pyrophosphate. tRNA 3'-terminal CCA addition is required both for tRNA processing and repair. Also involved in tRNA surveillance by mediating tandem CCA addition to generate a CCACCA at the 3' terminus of unstable tRNAs. While stable tRNAs receive only 3'-terminal CCA, unstable tRNAs are marked with CCACCA and rapidly degraded. This Pseudomonas putida (strain W619) protein is CCA-adding enzyme.